The following is a 352-amino-acid chain: Protein RecA (352 aa).

Glycine 66–threonine 73 is an ATP binding site.

This sequence belongs to the RecA family.

The protein resides in the cytoplasm. Its function is as follows. Can catalyze the hydrolysis of ATP in the presence of single-stranded DNA, the ATP-dependent uptake of single-stranded DNA by duplex DNA, and the ATP-dependent hybridization of homologous single-stranded DNAs. It interacts with LexA causing its activation and leading to its autocatalytic cleavage. This is Protein RecA from Psychrobacter arcticus (strain DSM 17307 / VKM B-2377 / 273-4).